Reading from the N-terminus, the 684-residue chain is Probable Xaa-Pro aminopeptidase P (684 aa).

Residues Asp481, Asp492, Glu590, and Glu604 each contribute to the Mn(2+) site.

This sequence belongs to the peptidase M24B family. It depends on Mn(2+) as a cofactor.

The catalysed reaction is Release of any N-terminal amino acid, including proline, that is linked to proline, even from a dipeptide or tripeptide.. In terms of biological role, catalyzes the removal of a penultimate prolyl residue from the N-termini of peptides. This chain is Probable Xaa-Pro aminopeptidase P (ampp), found in Neurospora crassa (strain ATCC 24698 / 74-OR23-1A / CBS 708.71 / DSM 1257 / FGSC 987).